Reading from the N-terminus, the 74-residue chain is Exodeoxyribonuclease 7 small subunit (74 aa).

This sequence belongs to the XseB family. Heterooligomer composed of large and small subunits.

The protein resides in the cytoplasm. The enzyme catalyses Exonucleolytic cleavage in either 5'- to 3'- or 3'- to 5'-direction to yield nucleoside 5'-phosphates.. Bidirectionally degrades single-stranded DNA into large acid-insoluble oligonucleotides, which are then degraded further into small acid-soluble oligonucleotides. The chain is Exodeoxyribonuclease 7 small subunit from Neisseria meningitidis serogroup A / serotype 4A (strain DSM 15465 / Z2491).